A 340-amino-acid chain; its full sequence is DNA-directed RNA polymerase subunit alpha (340 aa).

An alpha N-terminal domain (alpha-NTD) region spans residues 1–236 (MLSLSKNWNT…EQLQLFISFE (236 aa)). Residues 251 to 340 (FSPYLLKRVD…LSKRYEDSYN (90 aa)) are alpha C-terminal domain (alpha-CTD).

It belongs to the RNA polymerase alpha chain family. As to quaternary structure, homodimer. The RNAP catalytic core consists of 2 alpha, 1 beta, 1 beta' and 1 omega subunit. When a sigma factor is associated with the core the holoenzyme is formed, which can initiate transcription.

The catalysed reaction is RNA(n) + a ribonucleoside 5'-triphosphate = RNA(n+1) + diphosphate. In terms of biological role, DNA-dependent RNA polymerase catalyzes the transcription of DNA into RNA using the four ribonucleoside triphosphates as substrates. The sequence is that of DNA-directed RNA polymerase subunit alpha from Rickettsia conorii (strain ATCC VR-613 / Malish 7).